The chain runs to 183 residues: Ubiquitin-conjugating enzyme E2 6 (183 aa).

One can recognise a UBC core domain in the interval 1-148 (MASPSKRREM…VKEYCEKYAK (148 aa)). The Glycyl thioester intermediate role is filled by Cys-85. A disordered region spans residues 148–183 (KPEEILSDDDDDDSMSEDGSDSDDDDDDEIVGKADP). Positions 152 to 176 (ILSDDDDDDSMSEDGSDSDDDDDDE) are enriched in acidic residues.

It belongs to the ubiquitin-conjugating enzyme family. Expressed in roots, petals, sepals and silique walls.

It carries out the reaction S-ubiquitinyl-[E1 ubiquitin-activating enzyme]-L-cysteine + [E2 ubiquitin-conjugating enzyme]-L-cysteine = [E1 ubiquitin-activating enzyme]-L-cysteine + S-ubiquitinyl-[E2 ubiquitin-conjugating enzyme]-L-cysteine.. It participates in protein modification; protein ubiquitination. In terms of biological role, accepts the ubiquitin from the E1 complex and catalyzes its covalent attachment to other proteins. The protein is Ubiquitin-conjugating enzyme E2 6 (UBC6) of Arabidopsis thaliana (Mouse-ear cress).